Consider the following 141-residue polypeptide: Transcriptional regulator MraZ (141 aa).

SpoVT-AbrB domains lie at 5-47 (EFEH…PAER) and 76-119 (AAEC…GAEH).

It belongs to the MraZ family. As to quaternary structure, forms oligomers.

The protein localises to the cytoplasm. The protein resides in the nucleoid. This is Transcriptional regulator MraZ from Lactiplantibacillus plantarum (strain ATCC BAA-793 / NCIMB 8826 / WCFS1) (Lactobacillus plantarum).